A 249-amino-acid polypeptide reads, in one-letter code: Probable septum site-determining protein MinC (249 aa).

A disordered region spans residues 117–138; it reads AVRPPQPPPPPHARAEPAAPVA.

It belongs to the MinC family. As to quaternary structure, interacts with MinD and FtsZ.

Its function is as follows. Cell division inhibitor that blocks the formation of polar Z ring septums. Rapidly oscillates between the poles of the cell to destabilize FtsZ filaments that have formed before they mature into polar Z rings. Prevents FtsZ polymerization. The sequence is that of Probable septum site-determining protein MinC from Xanthomonas campestris pv. campestris (strain 8004).